The chain runs to 248 residues: UPF0524 protein C3orf70 homolog (248 aa).

A disordered region spans residues 169–248; sequence KESDTPKLGH…EVIETMETTV (80 aa). Acidic residues predominate over residues 200 to 227; it reads SCDEDTEEGAELSSEEDYSPESSWEPDE.

It belongs to the UPF0524 family.

In terms of biological role, may play a role in neuronal and neurobehavioral development. The chain is UPF0524 protein C3orf70 homolog from Mus musculus (Mouse).